The sequence spans 130 residues: Small ribosomal subunit protein uS8 (130 aa).

It belongs to the universal ribosomal protein uS8 family. As to quaternary structure, part of the 30S ribosomal subunit.

Functionally, one of the primary rRNA binding proteins, it binds directly to 16S rRNA central domain where it helps coordinate assembly of the platform of the 30S subunit. This chain is Small ribosomal subunit protein uS8, found in Pyrococcus furiosus (strain ATCC 43587 / DSM 3638 / JCM 8422 / Vc1).